A 474-amino-acid polypeptide reads, in one-letter code: UDP-N-acetylmuramoylalanine--D-glutamate ligase (474 aa).

An ATP-binding site is contributed by 134-140 (GSNGKST).

It belongs to the MurCDEF family.

The protein resides in the cytoplasm. It carries out the reaction UDP-N-acetyl-alpha-D-muramoyl-L-alanine + D-glutamate + ATP = UDP-N-acetyl-alpha-D-muramoyl-L-alanyl-D-glutamate + ADP + phosphate + H(+). It functions in the pathway cell wall biogenesis; peptidoglycan biosynthesis. Functionally, cell wall formation. Catalyzes the addition of glutamate to the nucleotide precursor UDP-N-acetylmuramoyl-L-alanine (UMA). The chain is UDP-N-acetylmuramoylalanine--D-glutamate ligase from Thiobacillus denitrificans (strain ATCC 25259 / T1).